The following is a 202-amino-acid chain: Neuroligin-3 (202 aa).

Over 1 to 202 (RYGSPTYFYA…TGTRMQGHSW (202 aa)) the chain is Extracellular. Cysteines 15 and 49 form a disulfide. Asparagine 50 carries N-linked (GlcNAc...) asparagine glycosylation. The segment at 154 to 202 (LRIPPTAPTSPAGPMARPGAPSGQPSHLPTATRMPRGPGTGTRMQGHSW) is disordered.

The protein belongs to the type-B carboxylesterase/lipase family. As to quaternary structure, homodimer, and heterodimer with NLGN1 and NLGN2. Interacts with neurexins NRXN1, NRXN2 and NRXN3. Interaction with neurexins is mediated by heparan sulfate glycan modification on neurexin. Interacts (via its C-terminus) with DLG4/PSD-95 (via PDZ domain 3).

Its subcellular location is the cell membrane. It localises to the synapse. Functionally, cell surface protein involved in cell-cell-interactions via its interactions with neurexin family members. Plays a role in synapse function and synaptic signal transmission, and probably mediates its effects by recruiting and clustering other synaptic proteins. May promote the initial formation of synapses, but is not essential for this. May also play a role in glia-glia or glia-neuron interactions in the developing peripheral nervous system. This Macaca mulatta (Rhesus macaque) protein is Neuroligin-3 (NLGN3).